Here is a 1050-residue protein sequence, read N- to C-terminus: Bifunctional glutamine synthetase adenylyltransferase/adenylyl-removing enzyme (1050 aa).

The segment at 1-531 is adenylyl removase; that stretch reads MTDPLIHTRK…LHSQLFYRPL (531 aa). Positions 537–1050 are adenylyl transferase; it reads NLSVDAMKLS…LDSVEARREL (514 aa).

The protein belongs to the GlnE family. The cofactor is Mg(2+).

The enzyme catalyses [glutamine synthetase]-O(4)-(5'-adenylyl)-L-tyrosine + phosphate = [glutamine synthetase]-L-tyrosine + ADP. The catalysed reaction is [glutamine synthetase]-L-tyrosine + ATP = [glutamine synthetase]-O(4)-(5'-adenylyl)-L-tyrosine + diphosphate. Functionally, involved in the regulation of glutamine synthetase GlnA, a key enzyme in the process to assimilate ammonia. When cellular nitrogen levels are high, the C-terminal adenylyl transferase (AT) inactivates GlnA by covalent transfer of an adenylyl group from ATP to specific tyrosine residue of GlnA, thus reducing its activity. Conversely, when nitrogen levels are low, the N-terminal adenylyl removase (AR) activates GlnA by removing the adenylyl group by phosphorolysis, increasing its activity. The regulatory region of GlnE binds the signal transduction protein PII (GlnB) which indicates the nitrogen status of the cell. This Corynebacterium efficiens (strain DSM 44549 / YS-314 / AJ 12310 / JCM 11189 / NBRC 100395) protein is Bifunctional glutamine synthetase adenylyltransferase/adenylyl-removing enzyme.